The following is a 326-amino-acid chain: Serpentine receptor class gamma-14 (326 aa).

The next 7 membrane-spanning stretches (helical) occupy residues 36-56 (QIIYIITGIFLNSAVLGTILW), 67-83 (FFTLFSVDCIANISILI), 115-135 (IIMLLTHHVSICKSLLQVLLV), 156-176 (LKYVISAVFLIPFCADWNIAI), 204-224 (FQLVFIIIALSFTFICTAITL), 243-263 (VIISIGFTFKVLFQIYYSFFF), and 274-294 (GFSFLALDFLTVGSPIVMICV).

Belongs to the nematode receptor-like protein srg family.

It is found in the membrane. The chain is Serpentine receptor class gamma-14 (srg-14) from Caenorhabditis elegans.